Reading from the N-terminus, the 187-residue chain is Peptide deformylase (187 aa).

Fe cation contacts are provided by Cys-107 and His-149. Glu-150 is an active-site residue. A Fe cation-binding site is contributed by His-153.

This sequence belongs to the polypeptide deformylase family. Fe(2+) serves as cofactor.

The enzyme catalyses N-terminal N-formyl-L-methionyl-[peptide] + H2O = N-terminal L-methionyl-[peptide] + formate. Its function is as follows. Removes the formyl group from the N-terminal Met of newly synthesized proteins. Requires at least a dipeptide for an efficient rate of reaction. N-terminal L-methionine is a prerequisite for activity but the enzyme has broad specificity at other positions. This is Peptide deformylase from Picosynechococcus sp. (strain ATCC 27264 / PCC 7002 / PR-6) (Agmenellum quadruplicatum).